A 187-amino-acid chain; its full sequence is UPF0301 protein YPO0936/y3322/YP_3506 (187 aa).

It belongs to the UPF0301 (AlgH) family.

This chain is UPF0301 protein YPO0936/y3322/YP_3506, found in Yersinia pestis.